The primary structure comprises 736 residues: Centrosomal protein kizuna (736 aa).

Residues His-10–Gln-35 are a coiled coil. Positions Asn-192–Ser-208 are enriched in polar residues. Disordered stretches follow at residues Asn-192–Leu-238, Ser-279–Ser-305, Glu-323–Pro-348, and Thr-642–Thr-690. Residues Glu-210–Ile-219 show a composition bias toward basic and acidic residues. Polar residues predominate over residues Leu-328–Ser-339. Positions Ser-658–Ser-668 are enriched in low complexity. The segment covering Ile-678–Thr-690 has biased composition (polar residues).

This sequence belongs to the kizuna family.

It is found in the cytoplasm. It localises to the cytoskeleton. Its subcellular location is the microtubule organizing center. The protein localises to the centrosome. The protein resides in the cilium basal body. Its function is as follows. Centrosomal protein required for establishing a robust mitotic centrosome architecture that can endure the forces that converge on the centrosomes during spindle formation. Required for stabilizing the expanded pericentriolar material around the centriole. The sequence is that of Centrosomal protein kizuna (kiz) from Xenopus laevis (African clawed frog).